Reading from the N-terminus, the 246-residue chain is Triosephosphate isomerase (246 aa).

Asn-9–Lys-11 is a substrate binding site. The active-site Electrophile is His-99. The active-site Proton acceptor is Glu-168. Substrate is bound by residues Gly-174, Ser-207, and Gly-228–Gly-229.

The protein belongs to the triosephosphate isomerase family. As to quaternary structure, homodimer.

It is found in the cytoplasm. The catalysed reaction is D-glyceraldehyde 3-phosphate = dihydroxyacetone phosphate. It participates in carbohydrate biosynthesis; gluconeogenesis. Its pathway is carbohydrate degradation; glycolysis; D-glyceraldehyde 3-phosphate from glycerone phosphate: step 1/1. Functionally, involved in the gluconeogenesis. Catalyzes stereospecifically the conversion of dihydroxyacetone phosphate (DHAP) to D-glyceraldehyde-3-phosphate (G3P). This chain is Triosephosphate isomerase, found in Prochlorococcus marinus (strain NATL2A).